The chain runs to 114 residues: MPIFTLNTNIKATDVPSDFLSSTSALVGNILSKPGSYVAVHINTDQQLSFGGSTKPAAFGTLMSIGGIEPSRNRDHSAKLFDHLNKKLGIPKNRMYIHFVNLNGDDVGWNGTTF.

The Proton acceptor; via imino nitrogen role is filled by P2. Residues K33 and I65 each contribute to the substrate site.

It belongs to the MIF family.

The protein resides in the secreted. It catalyses the reaction L-dopachrome = 5,6-dihydroxyindole-2-carboxylate. The enzyme catalyses 3-phenylpyruvate = enol-phenylpyruvate. Its function is as follows. Tautomerization of the methyl ester of L-dopachrome. Inhibits migration of human peripheral blood mononuclear cells. This chain is Macrophage migration inhibitory factor homolog, found in Trichinella spiralis (Trichina worm).